The primary structure comprises 594 residues: Adenine deaminase 1 (594 aa).

It belongs to the metallo-dependent hydrolases superfamily. Adenine deaminase family. Mn(2+) is required as a cofactor.

The catalysed reaction is adenine + H2O + H(+) = hypoxanthine + NH4(+). The protein is Adenine deaminase 1 of Latilactobacillus sakei subsp. sakei (strain 23K) (Lactobacillus sakei subsp. sakei).